We begin with the raw amino-acid sequence, 450 residues long: Glucose-6-phosphate isomerase (450 aa).

E291 (proton donor) is an active-site residue. Residues H312 and K426 contribute to the active site.

This sequence belongs to the GPI family.

Its subcellular location is the cytoplasm. It catalyses the reaction alpha-D-glucose 6-phosphate = beta-D-fructose 6-phosphate. It functions in the pathway carbohydrate biosynthesis; gluconeogenesis. It participates in carbohydrate degradation; glycolysis; D-glyceraldehyde 3-phosphate and glycerone phosphate from D-glucose: step 2/4. In terms of biological role, catalyzes the reversible isomerization of glucose-6-phosphate to fructose-6-phosphate. The chain is Glucose-6-phosphate isomerase from Clostridium botulinum (strain Langeland / NCTC 10281 / Type F).